We begin with the raw amino-acid sequence, 1912 residues long: Protein javelin (1912 aa).

Disordered regions lie at residues M1–Y32, G89–A145, R298–S377, Q460–E515, T545–Q586, S764–V920, I965–L1010, G1257–A1297, E1486–D1507, and Y1881–M1912. Composition is skewed to basic residues over residues Q97–A133 and S299–P313. The segment covering A339 to S354 has biased composition (polar residues). The segment covering H355–H374 has biased composition (low complexity). Positions E489–E498 are enriched in polar residues. Positions T499–S512 are enriched in low complexity. Acidic residues predominate over residues S553 to V566. Residues S568 to Q586 show a composition bias toward polar residues. 2 stretches are compositionally biased toward basic and acidic residues: residues Q772–R792 and R802–E869. The span at S890–N904 shows a compositional bias: acidic residues. Residues I965–P979 are compositionally biased toward basic and acidic residues. Low complexity predominate over residues P981–T990. Composition is skewed to acidic residues over residues L1494–D1507 and E1903–M1912.

Its subcellular location is the cytoplasm. The protein localises to the cytoskeleton. In terms of biological role, important for normal assembly of actin bundles during bristle formation. This is Protein javelin from Drosophila melanogaster (Fruit fly).